The sequence spans 149 residues: Transcriptional repressor NrdR (149 aa).

A zinc finger spans residues C3–C34. The ATP-cone domain occupies P49–E139.

Belongs to the NrdR family. It depends on Zn(2+) as a cofactor.

Functionally, negatively regulates transcription of bacterial ribonucleotide reductase nrd genes and operons by binding to NrdR-boxes. This chain is Transcriptional repressor NrdR, found in Vibrio parahaemolyticus serotype O3:K6 (strain RIMD 2210633).